We begin with the raw amino-acid sequence, 262 residues long: Dehydrin COR410 (262 aa).

Disordered regions lie at residues 1–153 (MEDE…HDTD) and 187–262 (LPGG…KPSA). Composition is skewed to basic and acidic residues over residues 34–45 (KKAEEDKEKEEE) and 53–74 (VSVE…KETL). Acidic residues predominate over residues 89–101 (SDEEEEEVIDDNG). A run of 2 repeats spans residues 106–126 (RKKK…HKDT) and 173–193 (EEEK…GHKK). The segment at 106-245 (RKKKKGLKEK…MDKLPGYHKT (140 aa)) is 3 X 21 AA repeats, Lys-rich. Composition is skewed to basic and acidic residues over residues 113 to 130 (KEKL…EGEH) and 187 to 196 (LPGGHKKPED). Residues 197-209 (AAAVPVTHAAPAP) show a composition bias toward low complexity. Repeat 3 spans residues 225 to 245 (AKEKKGLLGKIMDKLPGYHKT). The span at 244 to 262 (KTGEEDKAAAATGEHKPSA) shows a compositional bias: basic and acidic residues.

Expressed in roots, crown and leaves during cold acclimation.

The sequence is that of Dehydrin COR410 (COR410) from Triticum aestivum (Wheat).